The following is a 245-amino-acid chain: Pyridoxine 5'-phosphate synthase (245 aa).

2 residues coordinate 3-amino-2-oxopropyl phosphate: N8 and R19. H44 (proton acceptor) is an active-site residue. 1-deoxy-D-xylulose 5-phosphate contacts are provided by R46 and H51. E76 serves as the catalytic Proton acceptor. T106 provides a ligand contact to 1-deoxy-D-xylulose 5-phosphate. H198 serves as the catalytic Proton donor. 3-amino-2-oxopropyl phosphate-binding positions include D199 and 221–222 (GH).

The protein belongs to the PNP synthase family. As to quaternary structure, homooctamer; tetramer of dimers.

Its subcellular location is the cytoplasm. The enzyme catalyses 3-amino-2-oxopropyl phosphate + 1-deoxy-D-xylulose 5-phosphate = pyridoxine 5'-phosphate + phosphate + 2 H2O + H(+). The protein operates within cofactor biosynthesis; pyridoxine 5'-phosphate biosynthesis; pyridoxine 5'-phosphate from D-erythrose 4-phosphate: step 5/5. Catalyzes the complicated ring closure reaction between the two acyclic compounds 1-deoxy-D-xylulose-5-phosphate (DXP) and 3-amino-2-oxopropyl phosphate (1-amino-acetone-3-phosphate or AAP) to form pyridoxine 5'-phosphate (PNP) and inorganic phosphate. The protein is Pyridoxine 5'-phosphate synthase of Brucella anthropi (strain ATCC 49188 / DSM 6882 / CCUG 24695 / JCM 21032 / LMG 3331 / NBRC 15819 / NCTC 12168 / Alc 37) (Ochrobactrum anthropi).